Consider the following 778-residue polypeptide: Kin of IRRE-like protein 3 (778 aa).

An N-terminal signal peptide occupies residues 1 to 21; the sequence is MRPFQLDLLFLCFFLFSQELG. The Extracellular segment spans residues 22–535; sequence LQKRGCCLVL…GLEAESVPMA (514 aa). Ig-like C2-type domains lie at 48–142, 147–243, 249–330, 335–415, and 419–515; these read YSFS…ARLT, PDDP…TSVT, PPLV…RTVD, PRMT…VTLT, and PPII…IRLK. A disulfide bridge links Cys-69 with Cys-127. The N-linked (GlcNAc...) asparagine glycan is linked to Asn-167. Cys-170 and Cys-227 form a disulfide bridge. N-linked (GlcNAc...) asparagine glycosylation occurs at Asn-253. The cysteines at positions 271 and 314 are disulfide-linked. N-linked (GlcNAc...) asparagine glycosylation is present at Asn-324. Cystine bridges form between Cys-356-Cys-398 and Cys-440-Cys-499. Asn-498 is a glycosylation site (N-linked (GlcNAc...) asparagine). A helical membrane pass occupies residues 536–556; it reads VIIGVAVGAGVAFLVLMATIV. The Cytoplasmic segment spans residues 557–778; that stretch reads AFCCARSQRN…PLQRRMQTHV (222 aa). A compositionally biased stretch (polar residues) spans 727-736; that stretch reads CDSSVSSSGK. Positions 727 to 778 are disordered; it reads CDSSVSSSGKQDGYVQFDKASKASASSSHHSQSSSQNSDPSRPLQRRMQTHV. Positions 748-762 are enriched in low complexity; sequence KASASSSHHSQSSSQ.

This sequence belongs to the immunoglobulin superfamily. As to quaternary structure, homodimer; mediates homophilic interactions to promote cell adhesion. Interacts with NPHS1; forms heterodimers with NPHS1. Interacts with NPHS2/podocin (via the C-terminus). Interacts with CASK. Interacts (via extracellular region) with MAP1B. Interacts (via extracellular region) with MYO16. Interacts (via intracellular region) with ATP1B1. Interacts (via intracellular region) with SHMT2. Interacts (via intracellular region) with UFC1. Post-translationally, undergoes proteolysis by a metalloprotease and gives rise to a soluble form. In terms of tissue distribution, expressed mainly in adult brain, bone marrow and stromal cells. Expressed in diverse regions of the brain, including the cortex, hippocampus, striatum, olfactory bulb and cerebellum. In brain, expressed in pontine nucleus neurons (at protein level). In hippocampus, produced in both the dentate granule neurons and the GABAergic neurons, but not the CA3 neurons. Expressed in subpopulations of vomeronasal sensory neurons. Expressed in a subset of neurons in dorsal root ganglia.

Its subcellular location is the cell membrane. The protein localises to the cell projection. It localises to the axon. It is found in the dendrite. The protein resides in the secreted. Functionally, synaptic adhesion molecule required for the formation of target-specific synapses. Required for formation of target-specific synapses at hippocampal mossy fiber synapses. Required for formation of mossy fiber filopodia, the synaptic structures connecting dentate granule and GABA neurons. Probably acts as a homophilic adhesion molecule that promotes trans-cellular interactions and stabilize mossy fiber filipodia contact and subsequent synapse formation. Required for the coalescence of vomeronasal sensory neuron axons. May be involved in the hematopoietic supportive capacity of stroma cells; the secreted extracellular domain is directly responsible for supporting hematopoietic stem cells. This is Kin of IRRE-like protein 3 (Kirrel3) from Mus musculus (Mouse).